Here is a 440-residue protein sequence, read N- to C-terminus: Ankyrin repeat and MYND domain-containing protein 2 (440 aa).

ANK repeat units lie at residues 45-74 (NGMT…DASC), 79-108 (HGYT…ETDV), and 159-188 (KLAG…NPLL). Zn(2+) is bound by residues Cys-320, Cys-323, Cys-332, Cys-335, Cys-341, Cys-345, His-353, and Cys-357. The MYND-type zinc-finger motif lies at 320-357 (CTTCGEKGASKRCSVCKMVIYCDQTCQKTHWFAHKKMC). The segment covering 371–381 (AAKHKRQEEKN) has biased composition (basic and acidic residues). The segment at 371–440 (AAKHKRQEEK…APTGPQLSEE (70 aa)) is disordered.

Interacts with the retinal-specific guanylyl cyclase GC1.

The protein resides in the cell projection. Its subcellular location is the cilium. In terms of biological role, may be involved in the trafficking of signaling proteins to the cilia. The protein is Ankyrin repeat and MYND domain-containing protein 2 (Ankmy2) of Mus musculus (Mouse).